We begin with the raw amino-acid sequence, 430 residues long: Histidinol dehydrogenase (430 aa).

3 residues coordinate NAD(+): tyrosine 129, glutamine 190, and asparagine 213. Residues serine 236, glutamine 258, and histidine 261 each contribute to the substrate site. Zn(2+) contacts are provided by glutamine 258 and histidine 261. Residues glutamate 326 and histidine 327 each act as proton acceptor in the active site. 4 residues coordinate substrate: histidine 327, aspartate 360, glutamate 414, and histidine 419. Residue aspartate 360 coordinates Zn(2+). Histidine 419 serves as a coordination point for Zn(2+).

The protein belongs to the histidinol dehydrogenase family. Requires Zn(2+) as cofactor.

It catalyses the reaction L-histidinol + 2 NAD(+) + H2O = L-histidine + 2 NADH + 3 H(+). It participates in amino-acid biosynthesis; L-histidine biosynthesis; L-histidine from 5-phospho-alpha-D-ribose 1-diphosphate: step 9/9. In terms of biological role, catalyzes the sequential NAD-dependent oxidations of L-histidinol to L-histidinaldehyde and then to L-histidine. This chain is Histidinol dehydrogenase, found in Gluconobacter oxydans (strain 621H) (Gluconobacter suboxydans).